Reading from the N-terminus, the 149-residue chain is MSLEKDIESFVKSLDLELYEISVARDGDDSIYRVNVLSTQIEDGKKKGVSLDECVHLSRLISPLLDVTPPMSGEYRLEVGTPGIERKVSTLKQFVLSIGERVALTLKSKEKLKGLLLRVEESNIYLDVDAEEVCVEFAQISKAKTYFEW.

Belongs to the RimP family.

It localises to the cytoplasm. In terms of biological role, required for maturation of 30S ribosomal subunits. This Sulfurimonas denitrificans (strain ATCC 33889 / DSM 1251) (Thiomicrospira denitrificans (strain ATCC 33889 / DSM 1251)) protein is Ribosome maturation factor RimP.